A 75-amino-acid polypeptide reads, in one-letter code: uncharacterized protein (75 aa).

Positions 1–21 are cleaved as a signal peptide; that stretch reads MRLIVVSIMVTLLSGCGSIIS.

This sequence to E.coli YidQ.

This is an uncharacterized protein from Escherichia coli O157:H7.